The chain runs to 102 residues: Large ribosomal subunit protein bL21 (102 aa).

The protein belongs to the bacterial ribosomal protein bL21 family. Part of the 50S ribosomal subunit. Contacts protein L20.

Its function is as follows. This protein binds to 23S rRNA in the presence of protein L20. This Ehrlichia ruminantium (strain Gardel) protein is Large ribosomal subunit protein bL21.